The sequence spans 371 residues: COP9 signalosome complex subunit 5 (371 aa).

One can recognise an MPN domain in the interval 51–188 (VKISAVALIK…IGAFRTYPEG (138 aa)). Histidine 134, histidine 136, and aspartate 147 together coordinate Zn(2+). Residues 134 to 147 (HSHPGYGCWLSGID) carry the JAMM motif motif. Over residues 278–292 (NSSSKLKLKPTQPTT) the composition is skewed to low complexity. Disordered stretches follow at residues 278–333 (NSSS…SRIT) and 352–371 (TPLT…QGRY). Over residues 293-313 (KGKETTEGSDKKLKKGEKEFS) the composition is skewed to basic and acidic residues. A compositionally biased stretch (polar residues) spans 323–333 (NKVTQESSRIT).

Belongs to the peptidase M67A family. CSN5 subfamily. Component of the COP9 signalosome (CSN) complex.

Its subcellular location is the cytoplasm. The protein localises to the nucleus. Its function is as follows. Catalytic Component of the COP9 signalosome (CSN) complex that acts as an regulator of the ubiquitin (Ubl) conjugation pathway by mediating the deneddylation of the cullin subunit of SCF-type E3 ubiquitin-protein ligase complexes. This Cryptococcus neoformans var. neoformans serotype D (strain B-3501A) (Filobasidiella neoformans) protein is COP9 signalosome complex subunit 5 (RRI1).